The sequence spans 694 residues: Follicle-stimulating hormone receptor (694 aa).

The signal sequence occupies residues 1–17 (MALLLVSLLAFLSLGSG). 2 disulfide bridges follow: C18-C25 and C23-C32. The 29-residue stretch at 18-46 (CHHRVCHCSNRVFLCQESKVTEIPSDLPR) folds into the LRRNT domain. The Extracellular segment spans residues 18 to 365 (CHHRVCHCSN…EDIMGYDILR (348 aa)). LRR repeat units follow at residues 49–72 (LELR…FGDL), 73–97 (EKIE…LPKL), 98–118 (HEIR…AFQN), 119–143 (LPNL…KIQS), 144–169 (LQKV…MGLS), 170–192 (FEST…AFNG), 193–216 (TQLD…VFQG), 217–240 (ASGP…GLEN), and 241–259 (LKKL…PSLE). N-linked (GlcNAc...) asparagine glycans are attached at residues N191 and N199. N-linked (GlcNAc...) asparagine glycosylation is present at N268. Disulfide bonds link C275/C345, C276/C292, C276/C355, and C292/C337. N293 carries N-linked (GlcNAc...) asparagine glycosylation. At Y334 the chain carries Sulfotyrosine. Residues 366–386 (VLIWFISILAITGNIIVLVIL) form a helical membrane-spanning segment. At 387 to 397 (ITSQYKLTVPR) the chain is on the cytoplasmic side. The chain crosses the membrane as a helical span at residues 398-420 (FLMCNLAFADLCIGIYLLLIASV). Residues 421–442 (DIHTKSQYHNYAIDWQTGAGCD) lie on the Extracellular side of the membrane. Residues C441 and C516 are joined by a disulfide bond. A helical transmembrane segment spans residues 443–464 (AAGFFTVFASELSVYTLTAITL). Residues 465–484 (ERWHTITHAMQLECKVQLRH) lie on the Cytoplasmic side of the membrane. The helical transmembrane segment at 485-507 (AASVMLVGWIFAFAVALLPIFGI) threads the bilayer. Residues 508–527 (STYMKVSICLPMDIDSPLSQ) lie on the Extracellular side of the membrane. Residues 528-549 (LYVMSLLVLNVLAFVVICGCYI) form a helical membrane-spanning segment. The Cytoplasmic segment spans residues 550 to 572 (HIYLTVRNPNIVSSSSDTKIAKR). Residues 573-596 (MAILIFTDFLCMAPISFFAISASL) traverse the membrane as a helical segment. At 597-607 (KVPLITVSKSK) the chain is on the extracellular side. The helical transmembrane segment at 608–629 (ILLVLFYPINSCANPFLYAIFT) threads the bilayer. The Cytoplasmic segment spans residues 630-694 (KNFRRDFFIL…LVPLSHLAQN (65 aa)).

Belongs to the G-protein coupled receptor 1 family. FSH/LSH/TSH subfamily. In terms of assembly, homotrimer. Functions as a homotrimer binding the FSH hormone heterodimer composed of CGA and FSHB. Interacts with ARRB2. Interacts with APPL2; interaction is independent of follicle stimulating hormone stimulation. Post-translationally, N-glycosylated; indirectly required for FSH-binding, possibly via a conformational change that allows high affinity binding of hormone. In terms of processing, sulfated.

It is found in the cell membrane. Its function is as follows. G protein-coupled receptor for follitropin, the follicle-stimulating hormone. Through cAMP production activates the downstream PI3K-AKT and ERK1/ERK2 signaling pathways. The chain is Follicle-stimulating hormone receptor (FSHR) from Equus caballus (Horse).